Reading from the N-terminus, the 137-residue chain is ATP synthase epsilon chain, chloroplastic (137 aa).

The protein belongs to the ATPase epsilon chain family. In terms of assembly, F-type ATPases have 2 components, CF(1) - the catalytic core - and CF(0) - the membrane proton channel. CF(1) has five subunits: alpha(3), beta(3), gamma(1), delta(1), epsilon(1). CF(0) has three main subunits: a, b and c.

Its subcellular location is the plastid. It localises to the chloroplast thylakoid membrane. Its function is as follows. Produces ATP from ADP in the presence of a proton gradient across the membrane. The protein is ATP synthase epsilon chain, chloroplastic of Sorghum bicolor (Sorghum).